We begin with the raw amino-acid sequence, 184 residues long: Large ribosomal subunit protein uL6 (184 aa).

This sequence belongs to the universal ribosomal protein uL6 family. In terms of assembly, part of the 50S ribosomal subunit.

This protein binds to the 23S rRNA, and is important in its secondary structure. It is located near the subunit interface in the base of the L7/L12 stalk, and near the tRNA binding site of the peptidyltransferase center. The chain is Large ribosomal subunit protein uL6 from Pseudothermotoga lettingae (strain ATCC BAA-301 / DSM 14385 / NBRC 107922 / TMO) (Thermotoga lettingae).